Consider the following 293-residue polypeptide: Phosphoribosylaminoimidazole-succinocarboxamide synthase (293 aa).

This sequence belongs to the SAICAR synthetase family.

The enzyme catalyses 5-amino-1-(5-phospho-D-ribosyl)imidazole-4-carboxylate + L-aspartate + ATP = (2S)-2-[5-amino-1-(5-phospho-beta-D-ribosyl)imidazole-4-carboxamido]succinate + ADP + phosphate + 2 H(+). It functions in the pathway purine metabolism; IMP biosynthesis via de novo pathway; 5-amino-1-(5-phospho-D-ribosyl)imidazole-4-carboxamide from 5-amino-1-(5-phospho-D-ribosyl)imidazole-4-carboxylate: step 1/2. In Bordetella parapertussis (strain 12822 / ATCC BAA-587 / NCTC 13253), this protein is Phosphoribosylaminoimidazole-succinocarboxamide synthase.